A 688-amino-acid chain; its full sequence is Collagen alpha-2(IX) chain (688 aa).

A signal peptide spans 1–22 (MTAVPAPRSLFVLLQVLWLALA). Positions 26–162 (GPPGEPGPPG…PGKPGRPGTI (137 aa)) are triple-helical region 4 (COL4). A disordered region spans residues 26–171 (GPPGEPGPPG…IQGLEGSADF (146 aa)). Pro residues-rich tracts occupy residues 28–42 (PGEP…PPGV) and 105–126 (LPGP…PGPV). Positions 128-137 (LPGEIGTPGP) are enriched in low complexity. Pro residues predominate over residues 138-156 (KGDPGPEGPSGPPGPPGKP). Position 159 is a 4-hydroxyproline (Pro-159). The interval 163-179 (QGLEGSADFLCPTNCPA) is nonhelical region 4 (NC4). A glycan (O-linked (Xyl...) (glycosaminoglycan) serine) is linked at Ser-168. Residues 180-518 (GVKGPQGLQG…PGRQGVVGRA (339 aa)) form a triple-helical region 3 (COL3) region. A 5-hydroxylysine modification is found at Lys-182. Lys-182 carries an O-linked (Gal...) hydroxylysine glycan. The interval 183–517 (GPQGLQGVKG…QPGRQGVVGR (335 aa)) is disordered. 2 stretches are compositionally biased toward low complexity: residues 289-314 (PQGI…PGIP) and 392-412 (RGPV…EQGP). The segment covering 435 to 444 (GPRGGVGDPG) has biased composition (gly residues). The span at 502 to 517 (DRGVPGQPGRQGVVGR) shows a compositional bias: low complexity. A nonhelical region 3 (NC3) region spans residues 519–548 (ASDQHIVDVVLKMIQEQLAEVAVSAKREAL). The interval 549-631 (GAAGMVGLPG…PGLPGRPGQA (83 aa)) is triple-helical region 2 (COL2). The tract at residues 553–664 (MVGLPGPPGP…GPVGLPGFCE (112 aa)) is disordered. Positions 598-610 (KRGEKGDRGEMGH) are enriched in basic and acidic residues. Positions 632–633 (IN) are nonhelical region 2 (NC2). The tract at residues 634-663 (GKDGDRGSPGAPGEAGRPGRPGPVGLPGFC) is triple-helical region 1 (COL1). The tract at residues 664–688 (EPAACLGASAYTSARLTEPGSIKGP) is nonhelical region 1 (NC1).

The protein belongs to the fibril-associated collagens with interrupted helices (FACIT) family. Heterotrimer of an alpha 1(IX), an alpha 2(IX) and an alpha 3(IX) chain. The chains are linked to each other by interchain disulfide bonds. Trimers are also cross-linked via hydroxylysines. Covalently linked to the telopeptides of type II collagen by lysine-derived cross-links. Post-translationally, prolines at the third position of the tripeptide repeating unit (G-X-Y) are hydroxylated in some or all of the chains.

Its subcellular location is the secreted. It localises to the extracellular space. The protein localises to the extracellular matrix. Functionally, structural component of hyaline cartilage and vitreous of the eye. This Mus musculus (Mouse) protein is Collagen alpha-2(IX) chain (Col9a2).